A 171-amino-acid chain; its full sequence is 3-hydroxydecanoyl-[acyl-carrier-protein] dehydratase (171 aa).

Histidine 70 is an active-site residue.

Belongs to the thioester dehydratase family. FabA subfamily. As to quaternary structure, homodimer.

The protein localises to the cytoplasm. The catalysed reaction is a (3R)-hydroxyacyl-[ACP] = a (2E)-enoyl-[ACP] + H2O. The enzyme catalyses (3R)-hydroxydecanoyl-[ACP] = (2E)-decenoyl-[ACP] + H2O. It catalyses the reaction (2E)-decenoyl-[ACP] = (3Z)-decenoyl-[ACP]. It participates in lipid metabolism; fatty acid biosynthesis. In terms of biological role, necessary for the introduction of cis unsaturation into fatty acids. Catalyzes the dehydration of (3R)-3-hydroxydecanoyl-ACP to E-(2)-decenoyl-ACP and then its isomerization to Z-(3)-decenoyl-ACP. Can catalyze the dehydratase reaction for beta-hydroxyacyl-ACPs with saturated chain lengths up to 16:0, being most active on intermediate chain length. This is 3-hydroxydecanoyl-[acyl-carrier-protein] dehydratase from Shewanella sp. (strain ANA-3).